Reading from the N-terminus, the 308-residue chain is Phenylcoumaran benzylic ether reductase PT1 (308 aa).

NADP(+)-binding positions include 11–17 (GATGYIG), arginine 36, and lysine 46. Lysine 134 acts as the Proton acceptor in catalysis. Arginine 138 serves as a coordination point for NADP(+).

The protein belongs to the NmrA-type oxidoreductase family. Isoflavone reductase subfamily.

It carries out the reaction (-)-dehydrodiconiferyl alcohol + NADPH + H(+) = (S)-isodihydrodehydrodiconiferyl alcohol + NADP(+). The catalysed reaction is (+)-dehydrodiconiferyl alcohol + NADPH + H(+) = (R)-isodihydrodehydrodiconiferyl alcohol + NADP(+). The enzyme catalyses (2R,3S)-dihydrodehydrodiconiferyl alcohol + NADPH + H(+) = (S)-tetrahydrodehydrodiconiferyl alcohol + NADP(+). It catalyses the reaction (2S,3R)-dihydrodehydrodiconiferyl alcohol + NADPH + H(+) = (R)-tetrahydrodehydrodiconiferyl alcohol + NADP(+). Its function is as follows. Oxidoreductase involved in lignan biosynthesis. Catalyzes the NADPH-dependent reduction of phenylcoumaran benzylic ethers. Converts dehydrodiconiferyl alcohol (DDC) to isodihydrodehydrodiconiferyl alcohol (IDDDC), and dihydrodehydrodiconiferyl alcohol (DDDC) to tetrahydrodehydrodiconiferyl alcohol (TDDC). This is Phenylcoumaran benzylic ether reductase PT1 from Pinus taeda (Loblolly pine).